A 333-amino-acid chain; its full sequence is Protein 2 (333 aa).

Disordered stretches follow at residues 1–41 (MTGR…SENA) and 57–84 (LGAG…LPPT). A compositionally biased stretch (polar residues) spans 24–33 (QETTKQTTSA). Acidic residues predominate over residues 62 to 79 (DYDETEADPADTYGDTEA).

This is Protein 2 from Lactuca sativa (Garden lettuce).